The primary structure comprises 802 residues: Oligophrenin-1 (802 aa).

In terms of domain architecture, PH spans 265 to 368 (QPTIEGYLYT…WMEAMDGKEP (104 aa)). The region spanning 380–564 (MELNEVGFKF…ILIEHFGKIY (185 aa)) is the Rho-GAP domain. Disordered stretches follow at residues 569 to 588 (EESA…RHKP), 607 to 666 (LDES…EPCP), 680 to 770 (GGTK…NAGE), and 783 to 802 (FETA…GDES). Over residues 616–627 (HQTPNGTITSSI) the composition is skewed to polar residues. Residues 716–732 (HHKEGDADSFSKVRPPG) are compositionally biased toward basic and acidic residues.

In terms of assembly, interacts with HOMER1. Interacts with AMPA receptor complexes. Interacts with SH3GL2 (endophilin-A1). Interacts (via C-terminus) with NR1D1. Expressed in brain.

The protein localises to the postsynapse. It is found in the presynapse. It localises to the cell projection. Its subcellular location is the axon. The protein resides in the dendritic spine. The protein localises to the dendrite. It is found in the cytoplasm. Its function is as follows. Stimulates GTP hydrolysis of members of the Rho family. Its action on RHOA activity and signaling is implicated in growth and stabilization of dendritic spines, and therefore in synaptic function. Critical for the stabilization of AMPA receptors at postsynaptic sites. Critical for the regulation of synaptic vesicle endocytosis at presynaptic terminals. Required for the localization of NR1D1 to dendrites, can suppress its repressor activity and protect it from proteasomal degradation. This Homo sapiens (Human) protein is Oligophrenin-1 (OPHN1).